A 259-amino-acid polypeptide reads, in one-letter code: Acyl-[acyl-carrier-protein]--UDP-N-acetylglucosamine O-acyltransferase (259 aa).

Belongs to the transferase hexapeptide repeat family. LpxA subfamily. Homotrimer.

It is found in the cytoplasm. The catalysed reaction is a (3R)-hydroxyacyl-[ACP] + UDP-N-acetyl-alpha-D-glucosamine = a UDP-3-O-[(3R)-3-hydroxyacyl]-N-acetyl-alpha-D-glucosamine + holo-[ACP]. It participates in glycolipid biosynthesis; lipid IV(A) biosynthesis; lipid IV(A) from (3R)-3-hydroxytetradecanoyl-[acyl-carrier-protein] and UDP-N-acetyl-alpha-D-glucosamine: step 1/6. Involved in the biosynthesis of lipid A, a phosphorylated glycolipid that anchors the lipopolysaccharide to the outer membrane of the cell. This is Acyl-[acyl-carrier-protein]--UDP-N-acetylglucosamine O-acyltransferase from Psychrobacter cryohalolentis (strain ATCC BAA-1226 / DSM 17306 / VKM B-2378 / K5).